The sequence spans 340 residues: TATA-box-binding protein (340 aa).

The interval 1–78 (MNLNSPAVSM…HSLQGSSMQM (78 aa)) is disordered. The span at 57–68 (PQSIQPMQSQQM) shows a compositional bias: low complexity. Residues 69–78 (HSLQGSSMQM) are compositionally biased toward polar residues. Tandem repeats lie at residues 168–244 (LQNI…ARIV) and 258–335 (VQNM…YPIL).

This sequence belongs to the TBP family. In terms of assembly, component of the TFIID basal transcription factor complex, composed of TATA-box-binding protein tbp-1, and a number of TBP-associated factors (TAFs). Binds DNA as monomer.

It localises to the nucleus. Functionally, the TFIID basal transcription factor complex plays a major role in the initiation of RNA polymerase II (Pol II)-dependent transcription. TFIID recognizes and binds promoters via its subunit tbp-1, a TATA-box-binding protein, and promotes assembly of the pre-initiation complex (PIC). The TFIID complex consists of tbp-1 and TBP-associated factors (TAFs). General transcription factor that functions at the core of the TFIID complex. This Caenorhabditis elegans protein is TATA-box-binding protein (tbp-1).